Reading from the N-terminus, the 292-residue chain is Nanos homolog 1 (292 aa).

Disordered regions lie at residues 1–41 (MEAF…QPFS) and 68–121 (GGNG…SRGR). The interval 40-56 (FSSWNDYLGLATLITKA) is essential for its translational repressor activity. Residues 76–87 (PPSSSSSSCCSP) are compositionally biased toward low complexity. The segment covering 104-115 (DYDEDDDDDSDE) has biased composition (acidic residues). The Nanos-type zinc-finger motif lies at 213–267 (VCVFCRNNKEAMALYTTHILKGPDGRVLCPVLRRYTCPLCGASGDNAHTIKYCPL). 8 residues coordinate Zn(2+): Cys214, Cys217, His230, Cys241, Cys249, Cys252, His260, and Cys265. 2 consecutive short sequence motifs (C2HC) follow at residues 214-241 (CVFC…RVLC) and 249-265 (CPLC…IKYC). The interval 268–292 (SKVPPPPARPPPRSARDGPPGKKLR) is disordered. Over residues 269–280 (KVPPPPARPPPR) the composition is skewed to pro residues. The span at 281 to 292 (SARDGPPGKKLR) shows a compositional bias: basic and acidic residues.

This sequence belongs to the nanos family. Interacts with PUM2, SNAPIN and CTNNB1. Interacts (via N-terminal region) with CTNND1. Interacts with DDX20 (via N-terminal region). Testis and ovary (at protein level). Predominantly expressed in testis. Specifically expressed during germline development. In adult tissues, it is mainly expressed in spermatogonia, the stem cells of the germline. Also expressed during meiosis in spermatocytes. Not present in late, post-meiotic stage germ cells. Expressed in fetal ovaries, while it is weakly or not expressed in mature postmeiotic oocytes, suggesting that it may be expressed in premeiotic female germ cells. Expressed at high levels only in the E-cadherin deficient cell lines. Highly expressed in lung carcinomas and mostly detected in invasive tumor cells and its expression correlates with tumor aggressiveness.

It is found in the cytoplasm. It localises to the perinuclear region. Functionally, may act as a translational repressor which regulates translation of specific mRNAs by forming a complex with PUM2 that associates with the 3'-UTR of mRNA targets. Capable of interfering with the proadhesive and anti-invasive functions of E-cadherin. Up-regulates the production of MMP14 to promote tumor cell invasion. The protein is Nanos homolog 1 (NANOS1) of Homo sapiens (Human).